Here is an 877-residue protein sequence, read N- to C-terminus: Leucine--tRNA ligase (877 aa).

The 'HIGH' region signature appears at 43–53 (PYPSGRIHMGH). Positions 628–632 (KMSKS) match the 'KMSKS' region motif. K631 serves as a coordination point for ATP.

The protein belongs to the class-I aminoacyl-tRNA synthetase family.

It localises to the cytoplasm. The enzyme catalyses tRNA(Leu) + L-leucine + ATP = L-leucyl-tRNA(Leu) + AMP + diphosphate. The polypeptide is Leucine--tRNA ligase (Brucella melitensis biotype 2 (strain ATCC 23457)).